Consider the following 947-residue polypeptide: Protocadherin alpha-4 (947 aa).

An N-terminal signal peptide occupies residues 1–29 (MEFSWGSGQESQRLLLSFLLLAIWEAGNS). 6 consecutive Cadherin domains span residues 30 to 133 (QIHY…PPRF), 134 to 242 (PTTQ…APVF), 243 to 350 (DRSL…VPEL), 351 to 455 (EFKS…APVF), 456 to 565 (AQPE…APTL), and 573 to 681 (SGGI…APSR). Residues 30-697 (QIHYSIPEEA…HSEASLVDVN (668 aa)) lie on the Extracellular side of the membrane. A disulfide bridge links C96 with C102. N257 and N265 each carry an N-linked (GlcNAc...) asparagine glycan. T438 carries O-linked (Man) threonine glycosylation. O-linked (Man) serine glycosylation is found at S440 and S442. A glycan (N-linked (GlcNAc...) asparagine) is linked at N548. A helical transmembrane segment spans residues 698 to 718 (VYLIIAICAVSSLLVLTLLLY). Residues 719–947 (TALRCSTVPS…GNSTTDNSDQ (229 aa)) lie on the Cytoplasmic side of the membrane. 6 PXXP repeats span residues 734–737 (PPKP), 774–777 (PSLS), 796–799 (PRQP), 829–832 (PGGP), 870–873 (PGNP), and 888–891 (PGSP). Residues 734–891 (PPKPVMVCSS…PDKFIIPGSP (158 aa)) are 6 X 4 AA repeats of P-X-X-P. Positions 738-947 (VMVCSSAVGS…GNSTTDNSDQ (210 aa)) are required for interaction with FYN. 2 disordered regions span residues 761–805 (GEYP…DWRY) and 824–853 (ILRA…EVSP). The tract at residues 891-947 (PAIISIRQEPANNQIDKSDFITFGKKEETKKKKKKKKGNKTQEKKEKGNSTTDNSDQ) is disordered. The segment covering 906–920 (DKSDFITFGKKEETK) has biased composition (basic and acidic residues).

Forms homodimers in trans (molecules expressed by two different cells). Forms promiscuous heterodimers in cis (at the plasma membrane of the same cell) with other protocadherins. Interacts with FYN. In terms of tissue distribution, detected in brain throughout embryonic development. Detected in adult brain, in particular in cerebellum and forebrain.

It localises to the cell membrane. Calcium-dependent cell-adhesion protein involved in cells self-recognition and non-self discrimination. Thereby, it is involved in the establishment and maintenance of specific neuronal connections in the brain. The sequence is that of Protocadherin alpha-4 from Mus musculus (Mouse).